The chain runs to 147 residues: Large ribosomal subunit protein uL13 (147 aa).

The protein belongs to the universal ribosomal protein uL13 family. In terms of assembly, part of the 50S ribosomal subunit.

This protein is one of the early assembly proteins of the 50S ribosomal subunit, although it is not seen to bind rRNA by itself. It is important during the early stages of 50S assembly. The chain is Large ribosomal subunit protein uL13 from Mycobacteroides abscessus (strain ATCC 19977 / DSM 44196 / CCUG 20993 / CIP 104536 / JCM 13569 / NCTC 13031 / TMC 1543 / L948) (Mycobacterium abscessus).